We begin with the raw amino-acid sequence, 311 residues long: Olfactory receptor 5P3 (311 aa).

Over 1–25 (MGTGNDTTVVEFTLLGLSEDTTVCA) the chain is Extracellular. N-linked (GlcNAc...) asparagine glycosylation occurs at Asn-5. A helical transmembrane segment spans residues 26 to 46 (ILFLVFLGIYVVTLMGNISII). Over 47–54 (VLIRRSHH) the chain is Cytoplasmic. The helical transmembrane segment at 55–75 (LHTPMYIFLCHLAFVDIGYSS) threads the bilayer. The Extracellular segment spans residues 76-99 (SVTPVMLMSFLRKETSLPVAGCVA). Cys-97 and Cys-189 are disulfide-bonded. Residues 100-120 (QLCSVVTFGTAECFLLAAMAY) form a helical membrane-spanning segment. Over 121–139 (DRYVAICSPLLYSTCMSPG) the chain is Cytoplasmic. Residues 140 to 160 (VCIILVGMSYLGGCVNAWTFI) traverse the membrane as a helical segment. At 161–196 (GCLLRLSFCGPNKVNHFFCDYSPLLKLACSHDFTFE) the chain is on the extracellular side. Residues 197–217 (IIPAISSGSIIVATVCVIAIS) traverse the membrane as a helical segment. Over 218–237 (YIYILITILKMHSTKGRHKA) the chain is Cytoplasmic. Residues 238 to 258 (FSTCTSHLTAVTLFYGTITFI) form a helical membrane-spanning segment. Over 259 to 271 (YVMPKSSYSTDQN) the chain is Extracellular. The helical transmembrane segment at 272–292 (KVVSVFYTVVIPMLNPLIYSL) threads the bilayer. Residues 293–311 (RNKEIKGALKRELRIKIFS) lie on the Cytoplasmic side of the membrane.

The protein belongs to the G-protein coupled receptor 1 family. As to expression, expressed in the tongue.

Its subcellular location is the cell membrane. Odorant receptor (Potential). May be involved in taste perception. The polypeptide is Olfactory receptor 5P3 (OR5P3) (Homo sapiens (Human)).